The sequence spans 208 residues: uncharacterized protein (208 aa).

A signal peptide spans 1–34; sequence MPSHCRERLPFALHFFAVAYGASLWILGSHGLAA.

This is an uncharacterized protein from Sinorhizobium fredii (strain NBRC 101917 / NGR234).